Reading from the N-terminus, the 81-residue chain is Photosystem I iron-sulfur center (81 aa).

4Fe-4S ferredoxin-type domains follow at residues 2 to 31 (SHTV…MVPW) and 39 to 68 (IASS…IRVY). [4Fe-4S] cluster is bound by residues Cys11, Cys14, Cys17, Cys21, Cys48, Cys51, Cys54, and Cys58.

The cyanobacterial PSI reaction center is composed of one copy each of PsaA,B,C,D,E,F,I,J,K,L,M and X, and forms trimeric complexes. [4Fe-4S] cluster is required as a cofactor.

The protein localises to the cellular thylakoid membrane. The catalysed reaction is reduced [plastocyanin] + hnu + oxidized [2Fe-2S]-[ferredoxin] = oxidized [plastocyanin] + reduced [2Fe-2S]-[ferredoxin]. In terms of biological role, apoprotein for the two 4Fe-4S centers FA and FB of photosystem I (PSI); essential for photochemical activity. FB is the terminal electron acceptor of PSI, donating electrons to ferredoxin. The C-terminus interacts with PsaA/B/D and helps assemble the protein into the PSI complex. Required for binding of PsaD and PsaE to PSI. PSI is a plastocyanin/cytochrome c6-ferredoxin oxidoreductase, converting photonic excitation into a charge separation, which transfers an electron from the donor P700 chlorophyll pair to the spectroscopically characterized acceptors A0, A1, FX, FA and FB in turn. The chain is Photosystem I iron-sulfur center from Mastigocladus laminosus (Fischerella sp.).